Reading from the N-terminus, the 1695-residue chain is Protein TOPAZ1 (1695 aa).

3 disordered regions span residues M1 to Q128, M441 to R474, and A725 to T753. Basic residues predominate over residues R43–M52. 3 stretches are compositionally biased toward basic and acidic residues: residues G59–S68, S92–T113, and N459–R474. Residues S735–T753 show a composition bias toward polar residues.

Its subcellular location is the cytoplasm. The protein localises to the cytosol. In terms of biological role, important for normal spermatogenesis and male fertility. Specifically required for progression to the post-meiotic stages of spermatocyte development. Seems to be necessary for normal expression levels of a number of testis-expressed gene transcripts, although its role in this process is unclear. In Callithrix jacchus (White-tufted-ear marmoset), this protein is Protein TOPAZ1 (TOPAZ1).